Reading from the N-terminus, the 576-residue chain is Proline--tRNA ligase (576 aa).

This sequence belongs to the class-II aminoacyl-tRNA synthetase family. ProS type 1 subfamily. Homodimer.

The protein localises to the cytoplasm. The enzyme catalyses tRNA(Pro) + L-proline + ATP = L-prolyl-tRNA(Pro) + AMP + diphosphate. Its function is as follows. Catalyzes the attachment of proline to tRNA(Pro) in a two-step reaction: proline is first activated by ATP to form Pro-AMP and then transferred to the acceptor end of tRNA(Pro). As ProRS can inadvertently accommodate and process non-cognate amino acids such as alanine and cysteine, to avoid such errors it has two additional distinct editing activities against alanine. One activity is designated as 'pretransfer' editing and involves the tRNA(Pro)-independent hydrolysis of activated Ala-AMP. The other activity is designated 'posttransfer' editing and involves deacylation of mischarged Ala-tRNA(Pro). The misacylated Cys-tRNA(Pro) is not edited by ProRS. This is Proline--tRNA ligase from Thiobacillus denitrificans (strain ATCC 25259 / T1).